Here is a 668-residue protein sequence, read N- to C-terminus: Auxilin-like clathrin uncoating factor SWA2 (668 aa).

Residues 1 to 95 form a disordered region; that stretch reads MSDPFAHLLT…ANNTPPSALA (95 aa). Residues 1–100 form a CB1 region; the sequence is MSDPFAHLLT…PSALANTDDD (100 aa). The segment covering 17–36 has biased composition (polar residues); the sequence is SASASKETTPQSSNSPSITG. 2 positions are modified to phosphoserine: Ser-52 and Ser-64. A compositionally biased stretch (low complexity) spans 76–92; the sequence is PTNSTTKSNTANNTPPS. Positions 140–180 constitute a UBA domain; sequence DEVKDMEIARLMSLGLSIEEATEFYENDVTYERYLEILKSK. Residues 238 to 302 form a CB2 region; sequence EANDRLNNYS…FETKIDITKR (65 aa). 3 positions are modified to phosphoserine: Ser-264, Ser-308, and Ser-312. Disordered regions lie at residues 302–323 and 339–359; these read RTAP…EENS and EGNL…ENSN. Residues 303–362 form a CB3 region; the sequence is TAPDVSHSSSPTSGILIEENSRRNEPLIEDSLLDFSEGNLTNSKSNEDSTLFNENSNTDS. The span at 340–359 shows a compositional bias: polar residues; that stretch reads GNLTNSKSNEDSTLFNENSN. TPR repeat units follow at residues 374–407, 412–445, and 467–500; these read YNEF…LPLN, IIAL…FPSS, and PKIM…NFFD. Positions 511–556 are disordered; it reads QDFINPPPVKKSMPVKKKTTTTSPATKKQNLTASSSNSPISVDSTS. The span at 539-555 shows a compositional bias: polar residues; sequence QNLTASSSNSPISVDST. Positions 603–668 constitute a J domain; that stretch reads CNWKDVSMQD…DKFKLQNDIN (66 aa).

Interacts with the clathrin light and heavy chains CLC1 and CHC1, respectively. Binds to clathrin with its N-terminal domain containing 3 clathrin-binding (CB) motifs. Association with clathrin is transient. Binds to polyubiquitin and ubiquitinated proteins.

It localises to the cytoplasm. The protein resides in the endoplasmic reticulum membrane. Functionally, cofactor for the uncoating of clathrin-coated vesicles (CCVs) by Hsp70-type chaperones (SSA1/2/3 and SSB1/2). Coat disassembly is important for fusion of vesicles with target membranes and for recycling components of clathrin coats to the cytoplasm for further rounds of vesicle formation. Binds to assembled clathrin and recruits the ATP-activated chaperone to CCVs. Stimulates the ATPase activity of the clathrin-associated Hsp70-type chaperone SSA1, which then disrupts clathrin-clathrin interactions, leading to release of the clathrin coat. In addition, prevents unproductive clathrin assembly in the cell. Also required for cortical endoplasmic reticulum inheritance. The polypeptide is Auxilin-like clathrin uncoating factor SWA2 (SWA2) (Saccharomyces cerevisiae (strain ATCC 204508 / S288c) (Baker's yeast)).